The following is a 619-amino-acid chain: DEAD-box ATP-dependent RNA helicase 14 (619 aa).

Ala2 carries the post-translational modification N-acetylalanine. The WW domain maps to 17–51 (HTLPKPWKGLIDDRTGYLYFWNPETNVTQYEKPTP). Residues 47–139 (EKPTPSLPPK…APASELSPEA (93 aa)) are disordered. Low complexity predominate over residues 61 to 71 (VSVSSSVQVQQ). The segment covering 78–93 (PKDDDKYSRGSERVSR) has biased composition (basic and acidic residues). Residues 125-139 (PLPSSAPASELSPEA) are compositionally biased toward low complexity. At Ser136 the chain carries Phosphoserine. A Q motif motif is present at residues 158-186 (MSFEATGFPPELLREVLSAGFSAPTPIQA). The Helicase ATP-binding domain occupies 189–363 (WPIAMQGRDI…ADLLVNPAQV (175 aa)). 202-209 (AKTGSGKT) provides a ligand contact to ATP. Residues 311–314 (DEAD) carry the DEAD box motif. Residues 392–536 (RLEQILRSQE…RVPPQIREMA (145 aa)) form the Helicase C-terminal domain. Residues 528 to 619 (VPPQIREMAT…FHETMMMKHR (92 aa)) form a disordered region. Gly residues predominate over residues 552 to 568 (PSGGRGRGGDSGYGGRG). 2 stretches are compositionally biased toward basic and acidic residues: residues 582 to 595 (GRER…ERFN) and 609 to 619 (SFHETMMMKHR).

Belongs to the DEAD box helicase family. DDX5/DBP2 subfamily. In terms of tissue distribution, ubiquitous. Preferentially expressed in flowers and roots.

It is found in the nucleus. It carries out the reaction ATP + H2O = ADP + phosphate + H(+). ATP-dependent RNA helicase involved nonsense-mediated mRNA decay and ribosome biogenesis through rRNA processing. In Arabidopsis thaliana (Mouse-ear cress), this protein is DEAD-box ATP-dependent RNA helicase 14 (RH14).